A 20-amino-acid chain; its full sequence is DnaJ homolog subfamily C member 1 (20 aa).

Residues 1–20 (WESGDLELFDLVEEVXLNFY) lie on the Lumenal side of the membrane. The J domain occupies 18–20 (NFY).

As to quaternary structure, interacts (via SANT 2 domain) with SERPINA3; the interaction delays the formation of the covalent inhibitory complex SERPINA3-chymotrypsin, but does not alter the catalytic activity of SERPINA3. Interacts (via SANT 2 domain) with ITIH4 (via C-terminus); the interaction protects ITIH4 against in vitro cleavage by kallikrein. Interacts (via J domain) with HSPA5. Interacts (via cytosolic domain) with ribosomes.

The protein resides in the endoplasmic reticulum membrane. It is found in the nucleus membrane. The protein localises to the microsome membrane. The polypeptide is DnaJ homolog subfamily C member 1 (DNAJC1) (Canis lupus familiaris (Dog)).